Here is a 178-residue protein sequence, read N- to C-terminus: Disulfide bond formation protein B (178 aa).

At 1 to 14 (MLSFFKTLSMGRSG) the chain is on the cytoplasmic side. Residues 15 to 31 (WLLLAFSALVLELVALY) traverse the membrane as a helical segment. The Periplasmic segment spans residues 32–49 (FQYGMQLQPCVMCVYERV). A disulfide bridge connects residues Cys-41 and Cys-44. The helical transmembrane segment at 50–65 (ALGGILFAGIIGAIAP) threads the bilayer. The Cytoplasmic portion of the chain corresponds to 66 to 72 (SSWFFRF). A helical membrane pass occupies residues 73–90 (LGIIIGLGASVKGFLLAL). At 91-145 (KHVDYQLNPAPWNQCAYLPEFPQTLPLDQWFPYLFKPIGSCSDIQWSFLGFSMAQ) the chain is on the periplasmic side. A disulfide bridge links Cys-105 with Cys-131. The helical transmembrane segment at 146–164 (WILVMFAFYSILLAIILIS) threads the bilayer. Over 165–178 (QVKAGKPKHREIFR) the chain is Cytoplasmic.

The protein belongs to the DsbB family.

It is found in the cell inner membrane. Functionally, required for disulfide bond formation in some periplasmic proteins. Acts by oxidizing the DsbA protein. In Mannheimia succiniciproducens (strain KCTC 0769BP / MBEL55E), this protein is Disulfide bond formation protein B.